Consider the following 367-residue polypeptide: Peptide chain release factor 2 (367 aa).

Gln254 is modified (N5-methylglutamine).

The protein belongs to the prokaryotic/mitochondrial release factor family. In terms of processing, methylated by PrmC. Methylation increases the termination efficiency of RF2.

The protein localises to the cytoplasm. Its function is as follows. Peptide chain release factor 2 directs the termination of translation in response to the peptide chain termination codons UGA and UAA. In Aromatoleum aromaticum (strain DSM 19018 / LMG 30748 / EbN1) (Azoarcus sp. (strain EbN1)), this protein is Peptide chain release factor 2.